The chain runs to 283 residues: NAD kinase (283 aa).

The active-site Proton acceptor is D66. Residues 66 to 67, R71, 137 to 138, H165, D167, and 178 to 183 each bind NAD(+); these read DG, ND, and TGYSMS.

This sequence belongs to the NAD kinase family. It depends on a divalent metal cation as a cofactor.

It localises to the cytoplasm. The enzyme catalyses NAD(+) + ATP = ADP + NADP(+) + H(+). Functionally, involved in the regulation of the intracellular balance of NAD and NADP, and is a key enzyme in the biosynthesis of NADP. Catalyzes specifically the phosphorylation on 2'-hydroxyl of the adenosine moiety of NAD to yield NADP. This is NAD kinase from Agathobacter rectalis (strain ATCC 33656 / DSM 3377 / JCM 17463 / KCTC 5835 / VPI 0990) (Eubacterium rectale).